The primary structure comprises 237 residues: tRNA(His) guanylyltransferase (237 aa).

At Ala-2 the chain carries N-acetylalanine. Residues Asp-29 and Gly-30 each coordinate Mg(2+). Lys-32, Phe-33, His-34, Lys-44, and Asp-47 together coordinate GTP. Asp-77 is a binding site for Mg(2+).

The protein belongs to the tRNA(His) guanylyltransferase family. In terms of assembly, homotetramer. Requires Mg(2+) as cofactor.

It carries out the reaction a 5'-end ribonucleotide-tRNA(His) + GTP + ATP + H2O = a 5'-end phospho-guanosine-ribonucleotide-tRNA(His) + AMP + 2 diphosphate + H(+). The enzyme catalyses a 5'-end ribonucleotide-RNA + a ribonucleoside 5'-triphosphate + ATP + H2O = a 5'-end phospho-ribonucleoside-ribonucleotide-RNA + AMP + 2 diphosphate + H(+). In terms of biological role, acts as a tRNA(His) guanylyltransferase that catalyzes 3'-5' addition of a single guanosine residue to the -1 position of tRNA(His), to form a non-Watson-Crick G(-1):A-73 base pair. After addition of G(-1), THG1 removes pyrophosphate from the tRNA 5'-end, generating 5'-monophosphorylated G(-1)-containing tRNA which is important for recognition of tRNA(His) by its cognate histidyl-tRNA synthetase. In addition to the single-G(-1) addition reaction, THG1 polymerizes multiple G residues to the 5'-end of tRNA(His) variants using the 3'-end of the tRNA(His) acceptor stem as a template. The polypeptide is tRNA(His) guanylyltransferase (Saccharomyces cerevisiae (strain ATCC 204508 / S288c) (Baker's yeast)).